The following is a 209-amino-acid chain: ATP-dependent Clp protease proteolytic subunit (209 aa).

Ser-106 serves as the catalytic Nucleophile. The active site involves His-131.

This sequence belongs to the peptidase S14 family. As to quaternary structure, fourteen ClpP subunits assemble into 2 heptameric rings which stack back to back to give a disk-like structure with a central cavity, resembling the structure of eukaryotic proteasomes.

The protein resides in the cytoplasm. It catalyses the reaction Hydrolysis of proteins to small peptides in the presence of ATP and magnesium. alpha-casein is the usual test substrate. In the absence of ATP, only oligopeptides shorter than five residues are hydrolyzed (such as succinyl-Leu-Tyr-|-NHMec, and Leu-Tyr-Leu-|-Tyr-Trp, in which cleavage of the -Tyr-|-Leu- and -Tyr-|-Trp bonds also occurs).. Functionally, cleaves peptides in various proteins in a process that requires ATP hydrolysis. Has a chymotrypsin-like activity. Plays a major role in the degradation of misfolded proteins. In Brucella canis (strain ATCC 23365 / NCTC 10854 / RM-666), this protein is ATP-dependent Clp protease proteolytic subunit.